The chain runs to 209 residues: A-type ATP synthase subunit D (209 aa).

Belongs to the V-ATPase D subunit family. As to quaternary structure, has multiple subunits with at least A(3), B(3), C, D, E, F, H, I and proteolipid K(x).

The protein localises to the cell membrane. In terms of biological role, component of the A-type ATP synthase that produces ATP from ADP in the presence of a proton gradient across the membrane. This is A-type ATP synthase subunit D from Methanosarcina acetivorans (strain ATCC 35395 / DSM 2834 / JCM 12185 / C2A).